The chain runs to 906 residues: Glutamate receptor 1 (906 aa).

The N-terminal stretch at 1-18 is a signal peptide; that stretch reads MQHIFAFFCTGFLGAVVG. The Extracellular portion of the chain corresponds to 19–536; it reads ANFPNNIQIG…GVFSFLDPLA (518 aa). 6 N-linked (GlcNAc...) asparagine glycosylation sites follow: asparagine 63, asparagine 249, asparagine 257, asparagine 363, asparagine 401, and asparagine 406. A disulfide bond links cysteine 75 and cysteine 323. Residues proline 492, threonine 494, and arginine 499 each contribute to the L-glutamate site. The chain crosses the membrane as a helical span at residues 537–557; that stretch reads YEIWMCIVFAYIGVSVVLFLV. Over 558-584 the chain is Cytoplasmic; that stretch reads SRFSPYEWHSEEFEEGRDQTTSDQSNE. The helical; Pore-forming intramembrane region spans 585–600; that stretch reads FGIFNSLWFSLGAFMQ. The stretch at 601–603 is an intramembrane region; sequence QGC. The S-palmitoyl cysteine moiety is linked to residue cysteine 603. Over 604–609 the chain is Cytoplasmic; that stretch reads DISPRS. Residues 610–630 traverse the membrane as a helical segment; that stretch reads LSGRIVGGVWWFFTLIIISSY. Residues 631–805 are Extracellular-facing; sequence TANLAAFLTV…DKTSALSLSN (175 aa). Serine 645 carries the post-translational modification Phosphoserine. Residues serine 668 and threonine 669 each contribute to the L-glutamate site. Position 710 is a phosphoserine (serine 710). Glutamate 719 provides a ligand contact to L-glutamate. Cysteines 732 and 787 form a disulfide. The chain crosses the membrane as a helical span at residues 806 to 826; that stretch reads VAGVFYILIGGLGLAMLVALI. Residues 827–906 are Cytoplasmic-facing; it reads EFCYKSRSES…SGMPLGATGL (80 aa). Cysteine 829 carries S-palmitoyl cysteine lipidation. A phosphoserine mark is found at serine 849 and serine 863. The interval 861 to 880 is disordered; the sequence is RNSGAGASSAGSGENGRVVS. The segment covering 863–872 has biased composition (low complexity); sequence SGAGASSAGS. Residues 903-906 carry the PDZ-binding motif; that stretch reads ATGL.

This sequence belongs to the glutamate-gated ion channel (TC 1.A.10.1) family. GRIA1 subfamily. As to quaternary structure, homotetramer or heterotetramer of pore-forming glutamate receptor subunits; heteromeric assembly can be the result of both receptor subtype and flip-flop forms and according the composition, one partner can be dominant with respect to the fast desensitizing current component, whereas the other can determine the steady-state component. Tetramers may be formed by the dimerization of dimers. Found in a complex with GRIA2, GRIA3, GRIA4, CNIH2, CNIH3, CACNG2, CACNG3, CACNG4, CACNG5, CACNG7 and CACNG8. Interacts with HIP1 and RASGRF2. Interacts with SYNDIG1 and GRIA2. Interacts with DLG1 (via C-terminus). Interacts with LRFN1. Interacts with PRKG2. Interacts with CNIH2 and CACNG2. Interacts with CACNG5; this interaction modulates the gating. Interacts (via C-terminus) with PDLIM4 (via LIM domain); this interaction as well as the interaction of PDLIM4 with alpha-actinin is required for their colocalization in early endosomes. Interacts with SNX27 (via PDZ domain); the interaction is required for recycling to the plasma membrane when endocytosed and prevent degradation in lysosomes. Interacts (via PDZ-binding motif) with SHANK3 (via PDZ domain). Interacts with CACNG3; associates GRIA1 with the adapter protein complex 4 (AP-4) to target GRIA1 to the somatodendritic compartment of neurons. Interacts with CACNG2; this interaction mediates traffick to the plasma membrane and modulation of desensitization. Interaction with CNIH2 and CNIH3; this interaction promotes expression at the plasma membrane and extensively modulates their gating properties by slowing deactivation and desensitization kinetics. Found in a complex with GRIA2, GRIA3, GRIA4, DLG4, CACNG8 and CNIH2. Post-translationally, phosphorylated at Ser-645. Phosphorylated at Ser-710 by PKC. Phosphorylated at Ser-849 by PKC, PKA and CAMK2. Phosphorylated at Ser-863 by PKC, PKA and PRKG2. Phosphorylation of Ser-863 is reduced by induction of long-term depression and increased by induction of long-term potentiation. In terms of processing, palmitoylated. Depalmitoylated by CPT1C and upon L-glutamate stimulation. ZDHHC3/GODZ specifically palmitoylates Cys-603, which leads to Golgi retention and decreased cell surface expression. In contrast, Cys-829 palmitoylation does not affect cell surface expression but regulates stimulation-dependent endocytosis.

It is found in the cell membrane. Its subcellular location is the endoplasmic reticulum membrane. It localises to the postsynaptic cell membrane. The protein resides in the postsynaptic density membrane. The protein localises to the cell projection. It is found in the dendrite. Its subcellular location is the dendritic spine. It localises to the early endosome membrane. The protein resides in the recycling endosome membrane. The protein localises to the presynapse. It is found in the synapse. The enzyme catalyses Ca(2+)(in) = Ca(2+)(out). The catalysed reaction is Na(+)(in) = Na(+)(out). It carries out the reaction Mg(2+)(in) = Mg(2+)(out). It catalyses the reaction Li(+)(in) = Li(+)(out). The enzyme catalyses K(+)(in) = K(+)(out). The catalysed reaction is Sr(2+)(in) = Sr(2+)(out). In terms of biological role, ionotropic glutamate receptor that functions as a ligand-gated cation channel, gated by L-glutamate and glutamatergic agonists such as alpha-amino-3-hydroxy-5-methyl-4-isoxazolepropionic acid (AMPA), quisqualic acid, and kainic acid. L-glutamate acts as an excitatory neurotransmitter at many synapses in the central nervous system. Binding of the excitatory neurotransmitter L-glutamate induces a conformation change, leading to the opening of the cation channel, and thereby converts the chemical signal to an electrical impulse upon entry of monovalent and divalent cations such as sodium and calcium. The receptor then desensitizes rapidly and enters in a transient inactive state, characterized by the presence of bound agonist. In the presence of CACNG2 or CACNG4 or CACNG7 or CACNG8, shows resensitization which is characterized by a delayed accumulation of current flux upon continued application of L-glutamate. Calcium (Ca(2+)) permeability depends on subunits composition and, heteromeric channels containing edited GRIA2 subunit are calcium-impermeable. Also permeable to other divalents cations such as strontium(2+) and magnesium(2+) and monovalent cations such as potassium(1+) and lithium(1+). The protein is Glutamate receptor 1 of Macaca fascicularis (Crab-eating macaque).